Consider the following 146-residue polypeptide: 3-hydroxyacyl-[acyl-carrier-protein] dehydratase FabZ (146 aa).

His-49 is an active-site residue.

The protein belongs to the thioester dehydratase family. FabZ subfamily.

It localises to the cytoplasm. The enzyme catalyses a (3R)-hydroxyacyl-[ACP] = a (2E)-enoyl-[ACP] + H2O. Its function is as follows. Involved in unsaturated fatty acids biosynthesis. Catalyzes the dehydration of short chain beta-hydroxyacyl-ACPs and long chain saturated and unsaturated beta-hydroxyacyl-ACPs. The sequence is that of 3-hydroxyacyl-[acyl-carrier-protein] dehydratase FabZ from Pseudomonas fluorescens (strain ATCC BAA-477 / NRRL B-23932 / Pf-5).